The chain runs to 483 residues: Cobyric acid synthase (483 aa).

The GATase cobBQ-type domain maps to 252 to 439 (KLKVVVPVLT…LHGFLDSEAV (188 aa)). Catalysis depends on cysteine 333, which acts as the Nucleophile. Histidine 431 is a catalytic residue.

It belongs to the CobB/CobQ family. CobQ subfamily.

It functions in the pathway cofactor biosynthesis; adenosylcobalamin biosynthesis. Functionally, catalyzes amidations at positions B, D, E, and G on adenosylcobyrinic A,C-diamide. NH(2) groups are provided by glutamine, and one molecule of ATP is hydrogenolyzed for each amidation. The sequence is that of Cobyric acid synthase from Vibrio vulnificus (strain CMCP6).